The primary structure comprises 100 residues: Aspartyl/glutamyl-tRNA(Asn/Gln) amidotransferase subunit C (100 aa).

It belongs to the GatC family. Heterotrimer of A, B and C subunits.

It catalyses the reaction L-glutamyl-tRNA(Gln) + L-glutamine + ATP + H2O = L-glutaminyl-tRNA(Gln) + L-glutamate + ADP + phosphate + H(+). It carries out the reaction L-aspartyl-tRNA(Asn) + L-glutamine + ATP + H2O = L-asparaginyl-tRNA(Asn) + L-glutamate + ADP + phosphate + 2 H(+). Functionally, allows the formation of correctly charged Asn-tRNA(Asn) or Gln-tRNA(Gln) through the transamidation of misacylated Asp-tRNA(Asn) or Glu-tRNA(Gln) in organisms which lack either or both of asparaginyl-tRNA or glutaminyl-tRNA synthetases. The reaction takes place in the presence of glutamine and ATP through an activated phospho-Asp-tRNA(Asn) or phospho-Glu-tRNA(Gln). The protein is Aspartyl/glutamyl-tRNA(Asn/Gln) amidotransferase subunit C of Corynebacterium aurimucosum (strain ATCC 700975 / DSM 44827 / CIP 107346 / CN-1) (Corynebacterium nigricans).